Consider the following 507-residue polypeptide: ATP synthase subunit alpha, chloroplastic (507 aa).

170–177 (GDRQTGKT) is a binding site for ATP. At T257 the chain carries Phosphothreonine.

It belongs to the ATPase alpha/beta chains family. As to quaternary structure, F-type ATPases have 2 components, CF(1) - the catalytic core - and CF(0) - the membrane proton channel. CF(1) has five subunits: alpha(3), beta(3), gamma(1), delta(1), epsilon(1). CF(0) has four main subunits: a, b, b' and c.

It localises to the plastid. The protein localises to the chloroplast thylakoid membrane. The enzyme catalyses ATP + H2O + 4 H(+)(in) = ADP + phosphate + 5 H(+)(out). Functionally, produces ATP from ADP in the presence of a proton gradient across the membrane. The alpha chain is a regulatory subunit. The sequence is that of ATP synthase subunit alpha, chloroplastic from Draba nemorosa (Woodland whitlowgrass).